The primary structure comprises 116 residues: Large ribosomal subunit protein bL17 (116 aa).

The protein belongs to the bacterial ribosomal protein bL17 family. Part of the 50S ribosomal subunit. Contacts protein L32.

The protein is Large ribosomal subunit protein bL17 of Sulfurovum sp. (strain NBC37-1).